A 488-amino-acid chain; its full sequence is E3 ubiquitin-protein ligase XIAP (488 aa).

3 BIR repeats span residues arginine 40–asparagine 105, arginine 176–leucine 241, and arginine 266–isoleucine 329. Zn(2+)-binding residues include cysteine 298, cysteine 301, histidine 318, and cysteine 325. Residues cysteine 441–cysteine 476 form an RING-type zinc finger.

It belongs to the IAP family. As to quaternary structure, monomer, and homodimer. In terms of processing, degraded in a 2-step mechanism; a caspase-independent first step and a caspase-dependent second step. Stabilized indirectly by MAPK, which acts to delay caspase activation, rather than directly phosphorylating xiap.

The protein resides in the cytoplasm. It localises to the nucleus. It carries out the reaction S-ubiquitinyl-[E2 ubiquitin-conjugating enzyme]-L-cysteine + [acceptor protein]-L-lysine = [E2 ubiquitin-conjugating enzyme]-L-cysteine + N(6)-ubiquitinyl-[acceptor protein]-L-lysine.. Multi-functional protein which regulates not only caspases and apoptosis, but also acts as an E3 ubiquitin-protein ligase mediating ubiquitination and subsequent proteasomal degradation of its target proteins. Acts as a direct caspase inhibitor. E3 ubiquitin-protein ligase that acts as an important regulator of innate immunity by mediating 'Lys-63'-linked polyubiquitination of ripk2 downstream of NOD1 and NOD2, thereby transforming ripk2 into a scaffolding protein for downstream effectors, ultimately leading to activation of the NF-kappa-B and MAP kinases signaling. A key apoptotic suppressor in eggs. Acts as a positive regulator of Wnt signaling. This chain is E3 ubiquitin-protein ligase XIAP (xiap), found in Xenopus laevis (African clawed frog).